The chain runs to 229 residues: Large ribosomal subunit protein uL1 (229 aa).

The protein belongs to the universal ribosomal protein uL1 family. In terms of assembly, part of the 50S ribosomal subunit.

Its function is as follows. Binds directly to 23S rRNA. The L1 stalk is quite mobile in the ribosome, and is involved in E site tRNA release. Functionally, protein L1 is also a translational repressor protein, it controls the translation of the L11 operon by binding to its mRNA. This chain is Large ribosomal subunit protein uL1, found in Haemophilus ducreyi (strain 35000HP / ATCC 700724).